The chain runs to 431 residues: Glutamate-1-semialdehyde 2,1-aminomutase (431 aa).

An N6-(pyridoxal phosphate)lysine modification is found at lysine 265.

The protein belongs to the class-III pyridoxal-phosphate-dependent aminotransferase family. HemL subfamily. As to quaternary structure, homodimer. It depends on pyridoxal 5'-phosphate as a cofactor.

The protein localises to the cytoplasm. It catalyses the reaction (S)-4-amino-5-oxopentanoate = 5-aminolevulinate. It participates in porphyrin-containing compound metabolism; protoporphyrin-IX biosynthesis; 5-aminolevulinate from L-glutamyl-tRNA(Glu): step 2/2. The chain is Glutamate-1-semialdehyde 2,1-aminomutase from Vibrio atlanticus (strain LGP32) (Vibrio splendidus (strain Mel32)).